A 212-amino-acid polypeptide reads, in one-letter code: U8 snoRNA-decapping enzyme (212 aa).

Residues 1-23 (MAESRSPDRGAKEDKPRPRNISR) form a disordered region. The substrate site is built by His-37, Arg-63, and Phe-70. Residues 39 to 187 (LLHAPSQAKL…IGNSKSQLLY (149 aa)) form the Nudix hydrolase domain. Mn(2+) is bound by residues Gly-72, Glu-89, Glu-93, and Glu-150. The Nudix box motif lies at 74-95 (FVDTRDISLEEGLKRELEEELG). Substrate-binding residues include Asn-180 and Gln-184.

This sequence belongs to the Nudix hydrolase family. NUDT16 subfamily. As to quaternary structure, homodimer. Mg(2+) is required as a cofactor. Mn(2+) serves as cofactor. The cofactor is Co(2+). Detected in ovary, and at very low levels in epithelial cells (at protein level).

The protein resides in the nucleus. Its subcellular location is the nucleolus. It is found in the nucleoplasm. The protein localises to the cytoplasm. The catalysed reaction is a 5'-end (N(7)-methyl 5'-triphosphoguanosine)-ribonucleoside in mRNA + H2O = N(7)-methyl-GDP + a 5'-end phospho-ribonucleoside in mRNA + 2 H(+). The enzyme catalyses IDP + H2O = IMP + phosphate + H(+). It catalyses the reaction dIDP + H2O = dIMP + phosphate + H(+). It carries out the reaction a 5'-end NAD(+)-phospho-ribonucleoside in mRNA + H2O = a 5'-end phospho-ribonucleoside in mRNA + NAD(+) + H(+). The catalysed reaction is a 5'-end FAD-phospho-ribonucleoside in mRNA + H2O = a 5'-end phospho-adenosine-phospho-ribonucleoside in mRNA + FMN + 2 H(+). The enzyme catalyses a 5'-end CoA-ribonucleoside in mRNA + H2O = a 5'-end phospho-adenosine-phospho-ribonucleoside in mRNA + (R)-4'-phosphopantetheine + 2 H(+). RNA-binding and decapping enzyme that catalyzes the cleavage of the cap structure of snoRNAs and mRNAs in a metal-dependent manner. Part of the U8 snoRNP complex that is required for the accumulation of mature 5.8S and 28S rRNA. Has diphosphatase activity and removes m7G and/or m227G caps from U8 snoRNA and leaves a 5'monophosphate on the RNA. Also catalyzes the cleavage of the cap structure on mRNAs. Does not hydrolyze cap analog structures like 7-methylguanosine nucleoside triphosphate (m7GpppG). Also hydrolysis m7G- and m227G U3-capped RNAs but with less efficiencies. Has broad substrate specificity with manganese or cobalt as cofactor and can act on various RNA species. Binds to the U8 snoRNA; metal is not required for RNA-binding. May play a role in the regulation of snoRNAs and mRNAs degradation. Also acts as a phosphatase; hydrolyzes the non-canonical purine nucleotides inosine diphosphate (IDP) and deoxyinosine diphosphate (dITP) as well as guanosine diphosphate (GDP), deoxyguanosine diphosphate (dGDP), xanthine diphosphate (XDP), inosine triphosphate (ITP) and deoxyinosine triphosphate (ITP) to their respective monophosphate derivatives and does not distinguish between the deoxy- and ribose forms. The order of activity with different substrates is IDP &gt; dIDP &gt;&gt; GDP = dGDP &gt; XDP = ITP = dITP. Binds strongly to GTP, ITP and XTP. Participates in the hydrolysis of dIDP/IDP and probably excludes non-canonical purines from RNA and DNA precursor pools, thus preventing their incorporation into RNA and DNA and avoiding chromosomal lesions. Exhibits decapping activity towards NAD-capped RNAs and FAD-capped RNAs. Exhibits decapping activity towards dpCoA-capped RNAs in vitro. The protein is U8 snoRNA-decapping enzyme (nudt16) of Xenopus laevis (African clawed frog).